We begin with the raw amino-acid sequence, 561 residues long: Arf-GAP domain and FG repeat-containing protein 1 (561 aa).

In terms of domain architecture, Arf-GAP spans 11–135 (EKHLKMLRDM…WYVPPEQAKV (125 aa)). The C4-type zinc-finger motif lies at 29 to 52 (CFDCDQRGPTYVNMTVGSFVCTSC). At Ser-167 the chain carries Phosphoserine. A disordered region spans residues 170 to 193 (ALHLNKGTPSQSPVVGRSQGQQQE). Residues 176 to 191 (GTPSQSPVVGRSQGQQ) are compositionally biased toward polar residues. Thr-177 is subject to Phosphothreonine. Phosphoserine is present on residues Ser-181 and Ser-362. O-linked (GlcNAc) serine glycosylation occurs at Ser-367. A disordered region spans residues 413-433 (SAQTQPASSGPAPFGATPSTN).

As to quaternary structure, interacts with FCHO1. Interacts with EPS15R and EPS15. O-glycosylated. Expressed in the testes (at protein level).

It is found in the nucleus. It localises to the cytoplasmic vesicle. Required for vesicle docking or fusion during acrosome biogenesis. May play a role in RNA trafficking or localization. This is Arf-GAP domain and FG repeat-containing protein 1 (Agfg1) from Mus musculus (Mouse).